The following is a 460-amino-acid chain: ESX-1 secretion-associated protein EspB (460 aa).

Disordered stretches follow at residues 92–116 (LDND…SAEL), 303–335 (PSDG…PADT), and 405–441 (LGGG…TEDR).

Cleaved in the C-terminal region by MycP1.

The protein localises to the secreted. This Mycobacterium tuberculosis (strain CDC 1551 / Oshkosh) protein is ESX-1 secretion-associated protein EspB.